Here is a 180-residue protein sequence, read N- to C-terminus: Large ribosomal subunit protein uL6 (180 aa).

It belongs to the universal ribosomal protein uL6 family. In terms of assembly, part of the 50S ribosomal subunit.

In terms of biological role, this protein binds to the 23S rRNA, and is important in its secondary structure. It is located near the subunit interface in the base of the L7/L12 stalk, and near the tRNA binding site of the peptidyltransferase center. This is Large ribosomal subunit protein uL6 from Thermus aquaticus.